The primary structure comprises 484 residues: Maintenance of mitochondrial morphology protein 1 (484 aa).

Residues 1-22 (MSFQQSETVPVPAQSSLSFTQG) are Lumenal-facing. A helical membrane pass occupies residues 23–43 (FLLGQLSVVLLIGAFIKFFIF). Over 44-484 (GEAPPPPSRG…PGSLSGAAAR (441 aa)) the chain is Cytoplasmic. 3 disordered regions span residues 50 to 98 (PSRG…SSST), 272 to 319 (STPP…TGSP), and 388 to 484 (RTGV…AAAR). The span at 54–64 (LSHRASTHRRS) shows a compositional bias: basic residues. 2 stretches are compositionally biased toward polar residues: residues 65–78 (NSIY…ANNR) and 85–98 (SNSN…SSST). An SMP-LTD domain is found at 130 to 380 (QPESLDWFNV…EPRVQVVGLP (251 aa)). A compositionally biased stretch (pro residues) spans 272 to 286 (STPPLHTPSPSPSPP). A compositionally biased stretch (polar residues) spans 399 to 408 (TGSNAASRSA). The segment covering 413-427 (LGDHHLGDREPEGLR) has biased composition (basic and acidic residues). 2 stretches are compositionally biased toward polar residues: residues 437–449 (QFDS…SYNV) and 466–476 (GALSEQFQMPG).

Belongs to the MMM1 family. As to quaternary structure, homodimer. Component of the ER-mitochondria encounter structure (ERMES) or MDM complex, composed of mmm1, mdm10, mdm12 and mdm34. A mmm1 homodimer associates with one molecule of mdm12 on each side in a pairwise head-to-tail manner, and the SMP-LTD domains of mmm1 and mdm12 generate a continuous hydrophobic tunnel for phospholipid trafficking.

The protein resides in the endoplasmic reticulum membrane. Functionally, component of the ERMES/MDM complex, which serves as a molecular tether to connect the endoplasmic reticulum (ER) and mitochondria. Components of this complex are involved in the control of mitochondrial shape and protein biogenesis, and function in nonvesicular lipid trafficking between the ER and mitochondria. The mdm12-mmm1 subcomplex functions in the major beta-barrel assembly pathway that is responsible for biogenesis of all outer membrane beta-barrel proteins, and acts in a late step after the SAM complex. The mdm10-mdm12-mmm1 subcomplex further acts in the TOM40-specific pathway after the action of the mdm12-mmm1 complex. Essential for establishing and maintaining the structure of mitochondria and maintenance of mtDNA nucleoids. This chain is Maintenance of mitochondrial morphology protein 1, found in Aspergillus niger (strain ATCC MYA-4892 / CBS 513.88 / FGSC A1513).